The primary structure comprises 93 residues: N-myc protein (93 aa).

Efficient DNA binding requires dimerization with another bHLH protein. Binds DNA as a heterodimer with MAX. Barely detectable in most tissues assayed.

It localises to the nucleus. Functionally, may function as a transcription factor. This is N-myc protein (mycn) from Danio rerio (Zebrafish).